The primary structure comprises 510 residues: Pre-glycoprotein polyprotein GP complex (510 aa).

Gly2 carries N-myristoyl glycine; by host lipidation. Topologically, residues 2 to 17 are extracellular; the sequence is GQFITLMQSIPEALNM. Residues 18–32 form a helical membrane-spanning segment; sequence AFNVALVIVSLLCVT. A topological domain (cytoplasmic) is located at residue Lys33. A helical transmembrane segment spans residues 34–53; that stretch reads GLINLWKCGIIQLLMFLALA. Extracellular-side segments run 54 to 58 and 59 to 448; these read GRSCD and GEYK…ALAD. Cys57 is a binding site for Zn(2+). Asn75, Asn90, Asn101, Asn112, Asn117, Asn122, Asn133, Asn182, Asn218, and Asn243 each carry an N-linked (GlcNAc...) asparagine; by host glycan. 4 disulfides stabilise this stretch: Cys87–Cys250, Cys295–Cys308, Cys317–Cys326, and Cys380–Cys401. N-linked (GlcNAc...) asparagine; by host glycosylation is found at Asn381, Asn389, Asn406, and Asn411. A helical transmembrane segment spans residues 449–469; that stretch reads LCFWSLVFFTTTVFFQLIGIP. Topologically, residues 470-510 are cytoplasmic; sequence THRHLIGEGCPKPHRLTSNSLCSCGFYKIPKKPFRWVRKGK. Residues His471, His473, Cys479, His483, Cys491, and Cys493 each contribute to the Zn(2+) site.

The protein belongs to the arenaviridae GPC protein family. As to quaternary structure, homotetramer; disulfide-linked. Homotetramer. GP2 homotetramers bind through ionic interactions with GP1 homotetramers to form the GP complex together with the stable signal peptide. The GP-C polyprotein interacts with the host protease MBTPS1/SKI-1 resulting in the polyprotein processing. Specific enzymatic cleavages in vivo yield mature proteins. GP-C polyprotein is cleaved in the endoplasmic reticulum by the host protease MBTPS1. Only cleaved glycoprotein is incorporated into virions. Post-translationally, the SSP remains stably associated with the GP complex following cleavage by signal peptidase and plays crucial roles in the trafficking of GP through the secretory pathway. In terms of processing, myristoylation is necessary for GP2-mediated fusion activity.

The protein resides in the virion membrane. The protein localises to the host endoplasmic reticulum membrane. Its subcellular location is the host Golgi apparatus membrane. It localises to the host cell membrane. Functionally, class I viral fusion protein that directs fusion of viral and host endosomal membranes, leading to delivery of the nucleocapsid into the cytoplasm. Membrane fusion is mediated by irreversible conformational changes induced upon acidification in the endosome. In terms of biological role, stable signal peptide (SSP): cleaved and functions as a signal peptide. In addition, it is also retained as the third component of the GP complex. The SSP is required for efficient glycoprotein expression, post-translational maturation cleavage of GP1 and GP2, glycoprotein transport to the cell surface plasma membrane, formation of infectious virus particles, and acid pH-dependent glycoprotein-mediated cell fusion. Interacts with the host receptor. The polypeptide is Pre-glycoprotein polyprotein GP complex (Pirital mammarenavirus (isolate Rat/Venezuela/VAV-488/1995) (PIRV)).